A 154-amino-acid chain; its full sequence is Transcriptional repressor NrdR (154 aa).

The segment at 3–34 (CPFCRHPDSRVIDSRETDEGQAIRRRRSCPEC) is a zinc-finger region. An ATP-cone domain is found at 46-136 (LAVVKRSGVT…VYRSFSSADD (91 aa)).

Belongs to the NrdR family. Zn(2+) is required as a cofactor.

In terms of biological role, negatively regulates transcription of bacterial ribonucleotide reductase nrd genes and operons by binding to NrdR-boxes. The sequence is that of Transcriptional repressor NrdR from Mycobacterium bovis (strain ATCC BAA-935 / AF2122/97).